We begin with the raw amino-acid sequence, 702 residues long: Antigen peptide transporter 2 (702 aa).

Topologically, residues 1-6 are lumenal; the sequence is MALSYL. A helical membrane pass occupies residues 7-27; it reads RPWVSLLLADMALLGLLQGSL. At 28–56 the chain is on the cytoplasmic side; that stretch reads GNLLPQGLPGLWIEGTLRLGVLWGLLKVG. A helical transmembrane segment spans residues 57–77; the sequence is ELLGLVGTLLPLLCLATPLFF. Residues 78–98 lie on the Lumenal side of the membrane; that stretch reads SLRALVGGTASTSVVRVASAS. The chain crosses the membrane as a helical span at residues 99–119; sequence WGWLLAGYGAVALSWAVWAVL. The Cytoplasmic portion of the chain corresponds to 120–147; it reads SPAGVQEKEPGQENRTLMKRLLKLSRPD. Residues 148–168 form a helical membrane-spanning segment; that stretch reads LPFLIAAFFFLVVAVWGETLI. Residues 151-434 enclose the ABC transmembrane type-1 domain; that stretch reads LIAAFFFLVV…LVYMYGDMLS (284 aa). Over 169–186 the chain is Lumenal; that stretch reads PRYSGRVIDILGGDFDPD. Residues 187–207 traverse the membrane as a helical segment; sequence AFASAIFFMCLFSVGSSFSAG. The Cytoplasmic portion of the chain corresponds to 208–265; the sequence is CRGGSFLFTMSRINLRIREQLFSSLLRQDLGFFQETKTGELNSRLSSDTSLMSRWLPF. A helical membrane pass occupies residues 266–286; it reads NANILLRSLVKVVGLYFFMLQ. Topologically, residues 287–292 are lumenal; the sequence is VSPRLT. A helical transmembrane segment spans residues 293-313; the sequence is FLSLLDLPLTIAAEKVYNPRH. Residues 300-388 are part of the peptide-binding site; sequence PLTIAAEKVY…RRVMALGMQV (89 aa). The Cytoplasmic portion of the chain corresponds to 314 to 373; the sequence is QAVLKEIQDAVAKAGQVVREAVGGLQTVRSFGAEEQEVSHYKEALERCRQLWWRRDLEKD. A helical transmembrane segment spans residues 374–394; sequence VYLVIRRVMALGMQVLILNCG. The Lumenal segment spans residues 395-407; sequence VQQILAGEVTRGG. The chain crosses the membrane as a helical span at residues 408-428; the sequence is LLSFLLYQEEVGQYVRNLVYM. The segment at 413 to 432 is part of the peptide-binding site; it reads LYQEEVGQYVRNLVYMYGDM. The Cytoplasmic portion of the chain corresponds to 429–702; that stretch reads YGDMLSNVGA…AHLVQQRLEA (274 aa). Residues 467 to 701 enclose the ABC transporter domain; the sequence is VEFQDVSFSY…YAHLVQQRLE (235 aa). 502–509 provides a ligand contact to ATP; it reads GPNGSGKS.

The protein belongs to the ABC transporter superfamily. ABCB family. MHC peptide exporter (TC 3.A.1.209) subfamily. Heterodimer of TAP1 and TAP2 (TAP1-TAP2). A component of the peptide loading complex (PLC), interacts via TAPBP with MHCI heterodimer; this interaction mediates peptide-MHCI assembly. Mg(2+) serves as cofactor.

Its subcellular location is the endoplasmic reticulum membrane. It carries out the reaction a peptide antigen(in) + ATP + H2O = a peptide antigen(out) + ADP + phosphate + H(+). In terms of biological role, ABC transporter associated with antigen processing. In complex with TAP1 mediates unidirectional translocation of peptide antigens from cytosol to endoplasmic reticulum (ER) for loading onto MHC class I (MHCI) molecules. Uses the chemical energy of ATP to export peptides against the concentration gradient. During the transport cycle alternates between 'inward-facing' state with peptide binding site facing the cytosol to 'outward-facing' state with peptide binding site facing the ER lumen. Peptide antigen binding to ATP-loaded TAP1-TAP2 induces a switch to hydrolysis-competent 'outward-facing' conformation ready for peptide loading onto nascent MHCI molecules. Subsequently ATP hydrolysis resets the transporter to the 'inward facing' state for a new cycle. As a component of the peptide loading complex (PLC), acts as a molecular scaffold essential for peptide-MHCI assembly and antigen presentation. The polypeptide is Antigen peptide transporter 2 (Tap2) (Mus musculus (Mouse)).